We begin with the raw amino-acid sequence, 212 residues long: MRIGILGGTFDPIHYGHIRPAMEVKASLKLDKILLMPNHIPPHKNTTHSSTAQRLEMVAQVCEALTGFELCDIEAKRDSPSYTVVTLKQLSRLYPDDELFFIMGMDSFIHLQSWHKWQQLFELANIVVCQRPGWHLAEGHPMQHELNVRHATLEALSHSSAPQHGRIFTVDISPQDISSTQIRSLLAMGEIPQDALLPVTLNYIQKQRLYFS.

It belongs to the NadD family.

The enzyme catalyses nicotinate beta-D-ribonucleotide + ATP + H(+) = deamido-NAD(+) + diphosphate. It participates in cofactor biosynthesis; NAD(+) biosynthesis; deamido-NAD(+) from nicotinate D-ribonucleotide: step 1/1. Its function is as follows. Catalyzes the reversible adenylation of nicotinate mononucleotide (NaMN) to nicotinic acid adenine dinucleotide (NaAD). This chain is Probable nicotinate-nucleotide adenylyltransferase, found in Shewanella sp. (strain MR-7).